Consider the following 515-residue polypeptide: G-protein coupled receptor 176 (515 aa).

Positions 1–16 are enriched in polar residues; the sequence is MGHNGSWISPNASEPH. Positions 1 to 20 are disordered; the sequence is MGHNGSWISPNASEPHNASG. The Extracellular segment spans residues 1–42; it reads MGHNGSWISPNASEPHNASGAEAAGVNRSALGEFGEAQLYRQ. 4 N-linked (GlcNAc...) asparagine glycosylation sites follow: Asn-4, Asn-11, Asn-17, and Asn-27. The helical transmembrane segment at 43–63 threads the bilayer; that stretch reads FTTTVQVVIFIGSLLGNFMVL. Topologically, residues 64–82 are cytoplasmic; it reads WSTCRTTVFKSVTNRFIKN. Residues 83–103 form a helical membrane-spanning segment; it reads LACSGICASLVCVPFDIILST. Topologically, residues 104–118 are extracellular; sequence SPHCCWWIYTMLFCK. The helical transmembrane segment at 119-139 threads the bilayer; that stretch reads VVKFLHKVFCSVTILSFPAIA. Residues 140–160 are Cytoplasmic-facing; it reads LDRYYSVLYPLERKISDAKSR. The chain crosses the membrane as a helical span at residues 161–181; that stretch reads ELVMYIWAHAVVASVPVFAVT. Over 182–207 the chain is Extracellular; it reads NVADIYATSTCTEVWSNSLGHLVYVL. Residues 208 to 228 traverse the membrane as a helical segment; the sequence is VYNITTVIVPVVVVFLFLILI. Residues 229-267 are Cytoplasmic-facing; that stretch reads RRALSASQKKKVIIAALRTPQNTISIPYASQREAELHAT. The chain crosses the membrane as a helical span at residues 268–288; that stretch reads LLSMVMVFILCSVPYATLVVY. The Extracellular segment spans residues 289-299; it reads QTVLNVPDTSV. A helical membrane pass occupies residues 300–320; sequence FLLLTAVWLPKVSLLANPVLF. The Cytoplasmic portion of the chain corresponds to 321-515; that stretch reads LTVNKSVRKC…KVSIFPKVDS (195 aa).

Belongs to the G-protein coupled receptor 1 family.

Its subcellular location is the cell membrane. In terms of biological role, orphan receptor involved in normal circadian rhythm behavior. Acts through the G-protein subclass G(z)-alpha and has an agonist-independent basal activity to repress cAMP production. The polypeptide is G-protein coupled receptor 176 (GPR176) (Homo sapiens (Human)).